The chain runs to 129 residues: uncharacterized protein (129 aa).

The helical transmembrane segment at 5 to 25 (IIGLTLAFFVLFLTAVAILFT) threads the bilayer.

It localises to the membrane. This is an uncharacterized protein from Mycoplasma pneumoniae (strain ATCC 29342 / M129 / Subtype 1) (Mycoplasmoides pneumoniae).